A 381-amino-acid chain; its full sequence is Flagellar P-ring protein (381 aa).

The first 33 residues, 1 to 33 (MQFFNTLHPTRPHWLLAALCLIASLLGAGTAQA), serve as a signal peptide directing secretion.

This sequence belongs to the FlgI family. In terms of assembly, the basal body constitutes a major portion of the flagellar organelle and consists of four rings (L,P,S, and M) mounted on a central rod.

It localises to the periplasm. The protein localises to the bacterial flagellum basal body. Assembles around the rod to form the L-ring and probably protects the motor/basal body from shearing forces during rotation. The sequence is that of Flagellar P-ring protein from Albidiferax ferrireducens (strain ATCC BAA-621 / DSM 15236 / T118) (Rhodoferax ferrireducens).